Here is a 698-residue protein sequence, read N- to C-terminus: eEF1A lysine and N-terminal methyltransferase (698 aa).

An N-acetylmethionine modification is found at M1. The residue at position 267 (S267) is a Phosphoserine. The segment at 431 to 461 is disordered; sequence KDTSHRAQKKRKKDRKKQRPADTSEDFPPAP. The span at 436–448 shows a compositional bias: basic residues; the sequence is RAQKKRKKDRKKQ.

It belongs to the methyltransferase superfamily. Forms a tripartite complex containing GAB1, METTL13 and SPRY2. Within the complex interacts with GAB1 and SPRY2. Expressed in the inner ear (at protein level). Expression is detected in the cochlear duct, spiral limbus region, efferent and afferent nerves, and in spiral ganglion neurons (at protein level).

The protein resides in the cytoplasm. The protein localises to the nucleus. Its subcellular location is the mitochondrion. It catalyses the reaction L-lysyl-[protein] + S-adenosyl-L-methionine = N(6)-methyl-L-lysyl-[protein] + S-adenosyl-L-homocysteine + H(+). The catalysed reaction is N(6)-methyl-L-lysyl-[protein] + S-adenosyl-L-methionine = N(6),N(6)-dimethyl-L-lysyl-[protein] + S-adenosyl-L-homocysteine + H(+). It carries out the reaction N-terminal glycyl-L-lysyl-L-glutamyl-[protein] + 3 S-adenosyl-L-methionine = N-terminal N,N,N-trimethyl-glycyl-L-lysyl-L-glutamyl-[protein] + 3 S-adenosyl-L-homocysteine + 3 H(+). In terms of biological role, dual methyltransferase that catalyzes methylation of elongation factor 1-alpha (EEF1A1 and EEF1A2) at two different positions, and is therefore involved in the regulation of mRNA translation. Via its C-terminus, methylates EEF1A1 and EEF1A2 at the N-terminal residue 'Gly-2'. Via its N-terminus dimethylates EEF1A1 and EEF1A2 at residue 'Lys-55'. Has no activity towards core histones H2A, H2B, H3 and H4. The protein is eEF1A lysine and N-terminal methyltransferase of Mus musculus (Mouse).